The sequence spans 200 residues: Somatotropin (200 aa).

A signal peptide spans 1–22 (MARVLVVLSVVVASLFFSQGAT). Zn(2+) is bound at residue His38. The cysteines at positions 71 and 173 are disulfide-linked. Position 182 (Glu182) interacts with Zn(2+). A disulfide bridge links Cys190 with Cys198.

It belongs to the somatotropin/prolactin family.

It is found in the secreted. Growth hormone plays an important role in growth control and is involved in the regulation of several anabolic processes. Implicated as an osmoregulatory substance important for seawater adaptation. In Heteropneustes fossilis (Stinging catfish), this protein is Somatotropin (gh).